The following is a 1502-amino-acid chain: Gem-associated protein 5 (1502 aa).

The important for interaction with U1 snRNA stretch occupies residues 1–124 (MKPEPRTLPP…LHWSPTVKDL (124 aa)). The interaction with U4 snRNA stretch occupies residues 13–15 (NWY). S48 carries the phosphoserine modification. WD repeat units lie at residues 62 to 104 (GHTE…VVTE), 107 to 148 (LHQH…QHLF), 150 to 189 (EPRT…EVIH), 193 to 264 (GHDD…GVMV), 280 to 321 (TVKE…RRKY), 333 to 374 (HSRI…CCWT), 377 to 417 (SLGG…NNYD), 424 to 464 (GVKS…PPQI), 468 to 509 (YHKK…VVLQ), 533 to 573 (RYKL…LLCT), and 576 to 622 (QHHK…ESNP). Residue S624 is modified to Phosphoserine. WD repeat units lie at residues 637 to 677 (GHTA…PLFN) and 680 to 720 (GHRG…HSRP). Disordered regions lie at residues 740–797 (KLKK…SPVV) and 819–838 (SSKA…EALL). K754 is covalently cross-linked (Glycyl lysine isopeptide (Lys-Gly) (interchain with G-Cter in SUMO2)). Residues S757, S770, and S778 each carry the phosphoserine modification. Over residues 825-838 (LKKEPAKEKPEALL) the composition is skewed to basic and acidic residues. S845 is modified (phosphoserine). 2 disordered regions span residues 1309–1338 (VSDK…LSAE) and 1378–1427 (HQKS…SLPE). The stretch at 1355 to 1382 (ASLQTSQRTVAEVQETLAEMIRQHQKSQ) forms a coiled coil. Residues 1380–1391 (KSQLCKATTNGP) show a composition bias toward polar residues. The span at 1392–1407 (SRDEPSRDEPSQEAER) shows a compositional bias: basic and acidic residues.

Belongs to the WD repeat gemin-5 family. As to quaternary structure, part of the core SMN complex that contains SMN1, GEMIN2/SIP1, DDX20/GEMIN3, GEMIN4, GEMIN5, GEMIN6, GEMIN7, GEMIN8 and STRAP/UNRIP. Part of the SMN-Sm complex that contains SMN1, GEMIN2/SIP1, DDX20/GEMIN3, GEMIN4, GEMIN5, GEMIN6, GEMIN7, GEMIN8, STRAP/UNRIP and the Sm proteins SNRPB, SNRPD1, SNRPD2, SNRPD3, SNRPE, SNRPF and SNRPG. Interacts directly with SMN1, SNRPB, SNRPD1, SNRPD2, SNRPD3 and SNRPE. Identified in a SMN complex that contains GEMIN2/SIP1. Interacts with cytosolic DDX20/GEMIN3 and GEMIN4. Interacts with SNRNP70 and HNRNPU. Identified in a complex with 80S ribosomes; binds to the 60S large ribosomal subunit. Interacts with the ribosomal subunits RPL3 and RPL4.

Its subcellular location is the nucleus. It localises to the nucleoplasm. The protein resides in the gem. The protein localises to the cytoplasm. In terms of biological role, the SMN complex catalyzes the assembly of small nuclear ribonucleoproteins (snRNPs), the building blocks of the spliceosome, and thereby plays an important role in the splicing of cellular pre-mRNAs. Most spliceosomal snRNPs contain a common set of Sm proteins SNRPB, SNRPD1, SNRPD2, SNRPD3, SNRPE, SNRPF and SNRPG that assemble in a heptameric protein ring on the Sm site of the small nuclear RNA to form the core snRNP (Sm core). In the cytosol, the Sm proteins SNRPD1, SNRPD2, SNRPE, SNRPF and SNRPG are trapped in an inactive 6S pICln-Sm complex by the chaperone CLNS1A that controls the assembly of the core snRNP. To assemble core snRNPs, the SMN complex accepts the trapped 5Sm proteins from CLNS1A forming an intermediate. Binding of snRNA inside 5Sm ultimately triggers eviction of the SMN complex, thereby allowing binding of SNRPD3 and SNRPB to complete assembly of the core snRNP. Within the SMN complex, GEMIN5 recognizes and delivers the small nuclear RNAs (snRNAs) to the SMN complex. Binds to the 7-methylguanosine cap of RNA molecules. Binds to the 3'-UTR of SMN1 mRNA and regulates its translation; does not affect mRNA stability. May play a role in the regulation of protein synthesis via its interaction with ribosomes. In Mus musculus (Mouse), this protein is Gem-associated protein 5 (Gemin5).